Consider the following 927-residue polypeptide: Small conductance calcium-activated potassium channel protein (927 aa).

Polar residues predominate over residues 1–31 (MSIQKLNDTTNSGYVSSEETDSLLVSSSNPS). 3 disordered regions span residues 1-131 (MSIQ…EDVE), 181-251 (LSLK…VKSA), and 296-336 (HLHQ…SSST). A compositionally biased stretch (low complexity) spans 45–62 (SNSTNGPTTGASTSSSGS). Over residues 63–77 (VSGGGGGSGSGGGSA) the composition is skewed to gly residues. Composition is skewed to polar residues over residues 95–107 (TSTY…QSQH) and 200–214 (NLGT…SSIP). Composition is skewed to low complexity over residues 219 to 232 (SRCR…RRAS) and 296 to 308 (HLHQ…SQQQ). The span at 314–336 (ITSSPTNGSRIIRQSSQPESSST) shows a compositional bias: polar residues. Residues 489 to 509 (ALVMGMFGIIVMVIENELSSA) traverse the membrane as a helical segment. A helical transmembrane segment spans residues 530–550 (TVILLGLIVAYHALEVQLFMI). The chain crosses the membrane as a helical span at residues 569–589 (IGLELFICAIHPIPGEYYFQW). The helical transmembrane segment at 609 to 629 (VALSLPMFLRLYLICRVMLLH) threads the bilayer. The helical transmembrane segment at 658–678 (LMTICPGTVLLVFMVSLWIIA) threads the bilayer. Residues 696 to 716 (LLNSMWLTAITFLCVGYGDIV) constitute an intramembrane region (pore-forming). The helical transmembrane segment at 724-744 (GITLTCGMVGAGCTALLVAVV) threads the bilayer. A calmodulin-binding region spans residues 763–839 (DTQLTKRLKN…ITDMAKTQNT (77 aa)).

This sequence belongs to the potassium channel KCNN family. SK subfamily. As to quaternary structure, heterooligomer. The complex is composed of 4 channel subunits each of which binds to a calmodulin subunit which regulates the channel activity through calcium-binding.

The protein resides in the membrane. In terms of biological role, forms a voltage-independent potassium channel activated by intracellular calcium. Activation is followed by membrane hyperpolarization. Thought to regulate neuronal excitability by contributing to the slow component of synaptic afterhyperpolarization. The channel is blocked by apamin. The chain is Small conductance calcium-activated potassium channel protein from Drosophila melanogaster (Fruit fly).